A 604-amino-acid chain; its full sequence is Sulfite reductase [NADPH] flavoprotein alpha-component (604 aa).

The 139-residue stretch at 66-204 (VTVLSASQTG…AANAWTDNIA (139 aa)) folds into the Flavodoxin-like domain. FMN-binding positions include 72–77 (SQTGNA), 119–122 (STQG), and 155–164 (LGDSSYPNFC). The FAD-binding FR-type domain occupies 239 to 453 (ADPFPAALLA…VERNDGFRLP (215 aa)). Residues Thr-327, Gln-361, 391–394 (RLYS), 409–411 (TVG), and 424–427 (GGAS) contribute to the FAD site. NADP(+)-binding positions include 524–525 (SR), 530–534 (KIYVQ), and Asp-566. Tyr-604 is an FAD binding site.

The protein belongs to the NADPH-dependent sulphite reductase flavoprotein subunit CysJ family. This sequence in the N-terminal section; belongs to the flavodoxin family. It in the C-terminal section; belongs to the flavoprotein pyridine nucleotide cytochrome reductase family. In terms of assembly, alpha(8)-beta(8). The alpha component is a flavoprotein, the beta component is a hemoprotein. Requires FAD as cofactor. The cofactor is FMN.

The enzyme catalyses hydrogen sulfide + 3 NADP(+) + 3 H2O = sulfite + 3 NADPH + 4 H(+). It functions in the pathway sulfur metabolism; hydrogen sulfide biosynthesis; hydrogen sulfide from sulfite (NADPH route): step 1/1. In terms of biological role, component of the sulfite reductase complex that catalyzes the 6-electron reduction of sulfite to sulfide. This is one of several activities required for the biosynthesis of L-cysteine from sulfate. The flavoprotein component catalyzes the electron flow from NADPH -&gt; FAD -&gt; FMN to the hemoprotein component. The sequence is that of Sulfite reductase [NADPH] flavoprotein alpha-component from Neisseria meningitidis serogroup C (strain 053442).